The chain runs to 493 residues: Galactose-1-phosphate uridylyltransferase 2 (493 aa).

The protein belongs to the galactose-1-phosphate uridylyltransferase type 2 family.

It is found in the cytoplasm. It carries out the reaction alpha-D-galactose 1-phosphate + UDP-alpha-D-glucose = alpha-D-glucose 1-phosphate + UDP-alpha-D-galactose. It participates in carbohydrate metabolism; galactose metabolism. The polypeptide is Galactose-1-phosphate uridylyltransferase 2 (galT2) (Streptococcus pneumoniae (strain ATCC BAA-255 / R6)).